The sequence spans 255 residues: MVDPVAALCNYNVLEVIFSYLELDDLSHCSQVCKSWNLFLNDENSDVWRWHCLNKLPKEALKSDLLSSVSTYKTKLRAYFHAWSPNDCSRNVYIKPNGFTLHRNPVAQSTDAARGKIGFRHGRHAWEVIWEGPLGTVAVIGISTKEAVLQCHGYVALLGSDDQSWGWNLVENHLLHNGDMQGSYPLLNNAPKYQVGERIRIILDCDDNTLSFEKNYEFLGVAFRGLPDKKLYPTVSAVYGNTEVSMVYLGTPMDG.

An F-box domain is found at 3 to 51 (DPVAALCNYNVLEVIFSYLELDDLSHCSQVCKSWNLFLNDENSDVWRWH). The B30.2/SPRY domain occupies 61-253 (LKSDLLSSVS…VSMVYLGTPM (193 aa)).

It belongs to the FBXO45/Fsn family. In terms of assembly, component of an E3 ubiquitin ligase complex composed of hiw and Fsn.

It is found in the synapse. The protein operates within protein modification; protein ubiquitination. In terms of biological role, required in the presynaptic motoneuron to down-regulate the levels of wnd and restrain synaptic terminal growth at the neuromuscular junction (NMJ). The chain is F-box/SPRY domain-containing protein 1 from Drosophila ananassae (Fruit fly).